The sequence spans 337 residues: Protein-methionine-sulfoxide reductase catalytic subunit MsrP (337 aa).

The tat-type signal signal peptide spans 1–50; it reads MLIKLPSASGSKESDVTPESIYLSRRTLLASSLAGLAVTALPRWASAADA. Residues N94, 97-98, C152, T187, N237, R242, and 253-255 each bind Mo-molybdopterin; these read YE and SVK.

The protein belongs to the MsrP family. Heterodimer of a catalytic subunit (MsrP) and a heme-binding subunit (MsrQ). Mo-molybdopterin serves as cofactor. Predicted to be exported by the Tat system. The position of the signal peptide cleavage has not been experimentally proven.

The protein resides in the periplasm. The catalysed reaction is L-methionyl-[protein] + a quinone + H2O = L-methionyl-(S)-S-oxide-[protein] + a quinol. It catalyses the reaction L-methionyl-[protein] + a quinone + H2O = L-methionyl-(R)-S-oxide-[protein] + a quinol. Functionally, part of the MsrPQ system that repairs oxidized periplasmic proteins containing methionine sulfoxide residues (Met-O), using respiratory chain electrons. Thus protects these proteins from oxidative-stress damage caused by reactive species of oxygen and chlorine generated by the host defense mechanisms. MsrPQ is essential for the maintenance of envelope integrity under bleach stress, rescuing a wide series of structurally unrelated periplasmic proteins from methionine oxidation. The catalytic subunit MsrP is non-stereospecific, being able to reduce both (R-) and (S-) diastereoisomers of methionine sulfoxide. The sequence is that of Protein-methionine-sulfoxide reductase catalytic subunit MsrP from Pseudomonas syringae pv. tomato (strain ATCC BAA-871 / DC3000).